The primary structure comprises 158 residues: Transcription elongation factor GreA (158 aa).

Residues 46 to 66 (AEYEAAKERQGFIEGRISELE) adopt a coiled-coil conformation.

Belongs to the GreA/GreB family.

Necessary for efficient RNA polymerase transcription elongation past template-encoded arresting sites. The arresting sites in DNA have the property of trapping a certain fraction of elongating RNA polymerases that pass through, resulting in locked ternary complexes. Cleavage of the nascent transcript by cleavage factors such as GreA or GreB allows the resumption of elongation from the new 3'terminus. GreA releases sequences of 2 to 3 nucleotides. The sequence is that of Transcription elongation factor GreA from Neisseria meningitidis serogroup B (strain ATCC BAA-335 / MC58).